A 98-amino-acid chain; its full sequence is Large ribosomal subunit protein eL21 (98 aa).

Residues 1–22 are disordered; the sequence is MVQMSEGFRRKTRKKLSKHPRE. Residues 10 to 21 are compositionally biased toward basic residues; that stretch reads RKTRKKLSKHPR.

The protein belongs to the eukaryotic ribosomal protein eL21 family.

The chain is Large ribosomal subunit protein eL21 (rpl21e) from Methanocaldococcus jannaschii (strain ATCC 43067 / DSM 2661 / JAL-1 / JCM 10045 / NBRC 100440) (Methanococcus jannaschii).